A 346-amino-acid chain; its full sequence is Archaeosine synthase subunit beta (346 aa).

The region spanning 36–276 (GVQTKTLTVI…LRQAKAAHPE (241 aa)) is the Radical SAM core domain. [4Fe-4S] cluster contacts are provided by C51, C59, and C62.

Belongs to the radical SAM superfamily. RaSEA family. In terms of assembly, forms a robust complex with the archaeosine synthase alpha subunit ArcS. This complex likely consists of an alpha(2)beta(2) heterotetrameric structure. The cofactor is [4Fe-4S] cluster.

It carries out the reaction 7-N-[(5S)-5-amino-5-carboxypentyl]formamidino-7-deazaguanosine(15) in tRNA + S-adenosyl-L-methionine = archaeosine(15) in tRNA + L-1-piperideine-6-carboxylate + 5'-deoxyadenosine + L-methionine + 2 H(+). It participates in tRNA modification; archaeosine-tRNA biosynthesis. Its function is as follows. Radical SAM enzyme involved in the synthesis of archaeosine, a modified nucleoside present in the dihydrouridine loop (D-loop) of archaeal tRNAs. Catalyzes the cleavage of the C(epsilon)-N bond of the lysine moiety of q0kN15-tRNA, leading to the formation of archaeosine at position 15 in tRNAs. The chain is Archaeosine synthase subunit beta from Methanosarcina acetivorans (strain ATCC 35395 / DSM 2834 / JCM 12185 / C2A).